The chain runs to 49 residues: uncharacterized protein (49 aa).

This is an uncharacterized protein from Homo sapiens (Human).